The following is a 440-amino-acid chain: WAS/WASL-interacting protein family member 2 (440 aa).

Over residues Met-1–Thr-18 the composition is skewed to pro residues. A disordered region spans residues Met-1–Gly-36. The WH2 domain occupies Gly-36–Val-53. An Asymmetric dimethylarginine modification is found at Arg-37. A binds actin region spans residues Lys-49 to Lys-52. Disordered regions lie at residues Ile-56–Thr-387 and Arg-419–Arg-440. Low complexity predominate over residues Pro-116–Arg-133. The segment covering Arg-161–His-172 has biased composition (polar residues). 4 stretches are compositionally biased toward pro residues: residues Ala-176–Leu-193, Glu-222–Pro-236, Ala-249–Pro-262, and Arg-356–Leu-378.

Belongs to the verprolin family. As to quaternary structure, interacts with WASL and WASP, and this interaction results in cytoplasmic relocation of these two proteins along actin filaments. Interacts with NCK2 resulting in the localization to sites of focal adhesions. No interaction was seen with WASF2 and WASF3. Expressed mainly in brain, colon, lung and stomach (at protein level). Ubiquitously expressed, with high expression in brain, kidney, lung, and placenta.

It localises to the cytoplasm. The protein localises to the cytoskeleton. Its function is as follows. Plays an active role in the formation of cell surface protrusions downstream of activated PDGFB receptors. Plays an important role in actin-microspike formation through cooperation with WASL. May cooperate with WASP and WASL to induce mobilization and reorganization of the actin filament system. This is WAS/WASL-interacting protein family member 2 (WIPF2) from Homo sapiens (Human).